The following is a 217-amino-acid chain: Nucleoredoxin-like protein 1 (217 aa).

One can recognise a Thioredoxin domain in the interval methionine 1–leucine 164. Residues valine 188 to glycine 204 are compositionally biased toward basic and acidic residues. Residues valine 188–tryptophan 217 are disordered.

The protein belongs to the nucleoredoxin family. In terms of assembly, interacts with isoform 1 of BSG. As to expression, expressed in the retina (at protein level). Expressed predominantly by photoreceptors in both the inner and outer nuclear layer (at protein level). Not expressed in the testis, spleen, intestine, lung, cerebellum, or kidney.

It is found in the cell projection. The protein resides in the cilium. Its subcellular location is the photoreceptor outer segment. Its function is as follows. Plays an important role in retinal cone photoreceptor survival. In association with glucose transporter SLC16A1/GLUT1 and BSG, promotes retinal cone survival by enhancing aerobic glycolysis and accelerating the entry of glucose into photoreceptors. May play a role in cone cell viability, slowing down cone degeneration, does not seem to play a role in degenerating rods. This is Nucleoredoxin-like protein 1 (Nxnl1) from Mus musculus (Mouse).